Here is a 273-residue protein sequence, read N- to C-terminus: Orotidine 5'-phosphate decarboxylase (273 aa).

Residue Lys-95 is the Proton donor of the active site.

The protein belongs to the OMP decarboxylase family. Type 2 subfamily.

The catalysed reaction is orotidine 5'-phosphate + H(+) = UMP + CO2. It participates in pyrimidine metabolism; UMP biosynthesis via de novo pathway; UMP from orotate: step 2/2. The protein is Orotidine 5'-phosphate decarboxylase of Bordetella bronchiseptica (strain ATCC BAA-588 / NCTC 13252 / RB50) (Alcaligenes bronchisepticus).